A 142-amino-acid polypeptide reads, in one-letter code: Hemoglobin subunit zeta (142 aa).

Serine 2 is subject to N-acetylserine. One can recognise a Globin domain in the interval serine 2–arginine 142. Position 29 is a phosphothreonine (threonine 29). Position 53 is a phosphoserine (serine 53). Histidine 59 is a binding site for heme b. Serine 73 and serine 82 each carry phosphoserine. Histidine 88 is a heme b binding site.

Belongs to the globin family. As to quaternary structure, heterotetramer of two zeta chains and beta-type chains.

The zeta chain is an alpha-type chain of mammalian embryonic hemoglobin. In Capra hircus (Goat), this protein is Hemoglobin subunit zeta (HBZ1).